Here is a 398-residue protein sequence, read N- to C-terminus: MAYDVARVRGLHPSLGDGWVHFDAPAGMLIPDSVATTVSTAFRRSGASTVGAHPSARRSAAVLDAAREAVADLVNADPGGVVLGADRAVLLSLLAEASSSRAGLGYEVIVSRLDDEANIAPWLRAAHRYGAKVKWAEVDIETGELPTWQWESLISKSTRLVAVNSASGTLGGVTDLRAMTKLVHDVGALVVVDHSAAAPYRLLDIRETDADVVTVNAHAWGGPPIGAMVFRDPSVMNSFGSVSTNPYATGPARLEIGVHQFGLLAGVVASIEYLAALDESARGSRRERLAVSMQSADAYLNRVFDYLMVSLRSLPLVMLIGRPEAQIPVVSFAVHKVPADRVVQRLADNGILAIANTGSRVLDVLGVNDVGGAVTVGLAHYSTMAEVDQLVRALASLG.

It belongs to the class-V pyridoxal-phosphate-dependent aminotransferase family. In terms of assembly, homodimer.

Functionally, is essential for optimal growth. This is an uncharacterized protein from Mycobacterium tuberculosis (strain CDC 1551 / Oshkosh).